We begin with the raw amino-acid sequence, 647 residues long: tRNA-dihydrouridine(47) synthase [NAD(P)(+)] (647 aa).

2 disordered regions span residues 1–26 (MSSTEGGAKRVAEDGSEVSEAKRVGR) and 47–89 (AAES…KEEH). Basic and acidic residues-rich tracts occupy residues 7–26 (GAKRVAEDGSEVSEAKRVGR) and 55–66 (TSERMVEPEGGT). The segment covering 67–77 (RKKSKKARGQN) has biased composition (basic residues). Residues 78–89 (KNRDNRQAKEEH) show a composition bias toward basic and acidic residues. 2 consecutive C3H1-type zinc fingers follow at residues 86-116 (KEEHQLCPRLAQGNADACAFGAQCRYLHDVR) and 122-158 (KTAEIECPQFTGCPVFAATGRCPMGFKCRFLSSHCNM). FMN contacts are provided by residues 281-283 (PLT) and Gln-336. Catalysis depends on Cys-369, which acts as the Proton donor. Residues Lys-409, His-440, 489 to 491 (NGD), and 513 to 514 (AR) each bind FMN.

The protein belongs to the Dus family. Dus3 subfamily. It depends on FMN as a cofactor.

The protein resides in the cytoplasm. It is found in the nucleus. The enzyme catalyses 5,6-dihydrouridine(47) in tRNA + NAD(+) = uridine(47) in tRNA + NADH + H(+). The catalysed reaction is 5,6-dihydrouridine(47) in tRNA + NADP(+) = uridine(47) in tRNA + NADPH + H(+). It catalyses the reaction a 5,6-dihydrouridine in mRNA + NAD(+) = a uridine in mRNA + NADH + H(+). It carries out the reaction a 5,6-dihydrouridine in mRNA + NADP(+) = a uridine in mRNA + NADPH + H(+). Its function is as follows. Catalyzes the synthesis of dihydrouridine, a modified base found in the D-loop of most tRNAs. Specifically modifies U47 in cytoplasmic tRNAs. Catalyzes the synthesis of dihydrouridine in some mRNAs, thereby affecting their translation. The sequence is that of tRNA-dihydrouridine(47) synthase [NAD(P)(+)] (DUS3) from Eremothecium gossypii (strain ATCC 10895 / CBS 109.51 / FGSC 9923 / NRRL Y-1056) (Yeast).